We begin with the raw amino-acid sequence, 670 residues long: tRNA 5-methylaminomethyl-2-thiouridine biosynthesis bifunctional protein MnmC (670 aa).

Positions Met1 to Ile242 are tRNA (mnm(5)s(2)U34)-methyltransferase. Residues Ile269–Glu670 form an FAD-dependent cmnm(5)s(2)U34 oxidoreductase region.

This sequence in the N-terminal section; belongs to the methyltransferase superfamily. tRNA (mnm(5)s(2)U34)-methyltransferase family. In the C-terminal section; belongs to the DAO family. It depends on FAD as a cofactor.

Its subcellular location is the cytoplasm. The enzyme catalyses 5-aminomethyl-2-thiouridine(34) in tRNA + S-adenosyl-L-methionine = 5-methylaminomethyl-2-thiouridine(34) in tRNA + S-adenosyl-L-homocysteine + H(+). Catalyzes the last two steps in the biosynthesis of 5-methylaminomethyl-2-thiouridine (mnm(5)s(2)U) at the wobble position (U34) in tRNA. Catalyzes the FAD-dependent demodification of cmnm(5)s(2)U34 to nm(5)s(2)U34, followed by the transfer of a methyl group from S-adenosyl-L-methionine to nm(5)s(2)U34, to form mnm(5)s(2)U34. In Haemophilus influenzae (strain 86-028NP), this protein is tRNA 5-methylaminomethyl-2-thiouridine biosynthesis bifunctional protein MnmC.